Here is a 1043-residue protein sequence, read N- to C-terminus: Isoleucine--tRNA ligase (1043 aa).

Residues P46 and H57 each coordinate L-isoleucyl-5'-AMP. Residues 47–57 (PTANGLPHVGH) carry the 'HIGH' region motif. Residues C181 and C184 each coordinate Zn(2+). L-valine-binding residues include H319 and D328. Residues C389, C392, C461, C464, C502, and C504 each contribute to the Zn(2+) site. L-isoleucyl-5'-AMP-binding residues include E550, G551, D553, Q554, and H581. Residues 591 to 595 (KMSKS) carry the 'KMSKS' region motif. K594 provides a ligand contact to ATP.

This sequence belongs to the class-I aminoacyl-tRNA synthetase family. IleS type 2 subfamily. In terms of assembly, monomer. The cofactor is Zn(2+).

The protein localises to the cytoplasm. The enzyme catalyses tRNA(Ile) + L-isoleucine + ATP = L-isoleucyl-tRNA(Ile) + AMP + diphosphate. Its function is as follows. Catalyzes the attachment of isoleucine to tRNA(Ile). As IleRS can inadvertently accommodate and process structurally similar amino acids such as valine, to avoid such errors it has two additional distinct tRNA(Ile)-dependent editing activities. One activity is designated as 'pretransfer' editing and involves the hydrolysis of activated Val-AMP. The other activity is designated 'posttransfer' editing and involves deacylation of mischarged Val-tRNA(Ile). This Thermus thermophilus (strain ATCC 27634 / DSM 579 / HB8) protein is Isoleucine--tRNA ligase (ileS).